We begin with the raw amino-acid sequence, 54 residues long: Large ribosomal subunit protein bL33A (54 aa).

It belongs to the bacterial ribosomal protein bL33 family.

The sequence is that of Large ribosomal subunit protein bL33A from Streptomyces griseus subsp. griseus (strain JCM 4626 / CBS 651.72 / NBRC 13350 / KCC S-0626 / ISP 5235).